The chain runs to 166 residues: Large ribosomal subunit protein bL17 (166 aa).

The interval 122–166 (PESAPVKAKQDRSKRVRGSKKTQEGSEKAEVSASAGEAAAVTEEK) is disordered. Basic and acidic residues predominate over residues 142-151 (KTQEGSEKAE). Over residues 152–166 (VSASAGEAAAVTEEK) the composition is skewed to low complexity.

Belongs to the bacterial ribosomal protein bL17 family. As to quaternary structure, part of the 50S ribosomal subunit. Contacts protein L32.

In Chlorobium phaeobacteroides (strain BS1), this protein is Large ribosomal subunit protein bL17.